The following is a 236-amino-acid chain: Large ribosomal subunit protein uL1 (236 aa).

This sequence belongs to the universal ribosomal protein uL1 family. Part of the 50S ribosomal subunit.

In terms of biological role, binds directly to 23S rRNA. The L1 stalk is quite mobile in the ribosome, and is involved in E site tRNA release. Protein L1 is also a translational repressor protein, it controls the translation of the L11 operon by binding to its mRNA. The polypeptide is Large ribosomal subunit protein uL1 (Heliobacterium modesticaldum (strain ATCC 51547 / Ice1)).